The chain runs to 834 residues: Protein kintoun (834 aa).

Disordered regions lie at residues 214–239, 374–415, 547–669, and 759–834; these read TAEE…KQEP, SRED…SVAP, KGKV…STGR, and KKNQ…EMDD. The residue at position 378 (Ser-378) is a Phosphoserine. Residues 389 to 398 show a composition bias toward acidic residues; that stretch reads PVEEDPDGEL. Positions 552–571 are enriched in basic and acidic residues; the sequence is AKKDNAPLDVKFERNQEGHA. Positions 582 to 596 are enriched in acidic residues; that stretch reads EEEEDKENQDQEPES. A compositionally biased stretch (low complexity) spans 597–607; it reads DQQQQQQVQNK. Basic residues-rich tracts occupy residues 608–619 and 759–773; these read KPGKKQRKKNKK and KKNQ…RAQQ. Residue Ser-777 is modified to Phosphoserine. Positions 785–798 are enriched in basic and acidic residues; the sequence is EETRGSALKQEENP.

It belongs to the PIH1 family. Kintoun subfamily. In terms of assembly, interacts with Pp1alpha-96A, Pp1-87B, Pp1-13C and flw.

It is found in the cytoplasm. Functionally, required for cytoplasmic pre-assembly of axonemal dyneins, thereby playing a central role in motility in cilia and flagella. Involved in pre-assembly of dynein arm complexes in the cytoplasm before intraflagellar transport loads them for the ciliary compartment. The chain is Protein kintoun from Drosophila melanogaster (Fruit fly).